The sequence spans 277 residues: Ribosomal RNA small subunit methyltransferase A (277 aa).

S-adenosyl-L-methionine-binding residues include asparagine 24, leucine 26, glycine 51, glutamate 72, aspartate 96, and asparagine 123.

It belongs to the class I-like SAM-binding methyltransferase superfamily. rRNA adenine N(6)-methyltransferase family. RsmA subfamily.

It is found in the cytoplasm. The enzyme catalyses adenosine(1518)/adenosine(1519) in 16S rRNA + 4 S-adenosyl-L-methionine = N(6)-dimethyladenosine(1518)/N(6)-dimethyladenosine(1519) in 16S rRNA + 4 S-adenosyl-L-homocysteine + 4 H(+). In terms of biological role, specifically dimethylates two adjacent adenosines (A1518 and A1519) in the loop of a conserved hairpin near the 3'-end of 16S rRNA in the 30S particle. May play a critical role in biogenesis of 30S subunits. The chain is Ribosomal RNA small subunit methyltransferase A from Ureaplasma parvum serovar 3 (strain ATCC 27815 / 27 / NCTC 11736).